A 661-amino-acid chain; its full sequence is 72 kDa type IV collagenase (661 aa).

The N-terminal stretch at 1-30 is a signal peptide; the sequence is MTEARVSRGALAALLRALCALGCLLGRAAA. Residues 31 to 110 constitute a propeptide, activation peptide; sequence APSPIIKFPG…PRCGNPDVAN (80 aa). A Cysteine switch motif is present at residues 101-108; it reads PRCGNPDV. Cys103 serves as a coordination point for Zn(2+). Residues 111–222 are collagenase-like 1; that stretch reads YNFFPRKPKW…LRTLGEGQVV (112 aa). Residues Asp135 and Asp169 each contribute to the Ca(2+) site. Zn(2+)-binding residues include His179 and Asp181. 2 residues coordinate Ca(2+): Asp186 and Gly187. His194 provides a ligand contact to Zn(2+). Positions 201, 203, and 205 each coordinate Ca(2+). Zn(2+) is bound at residue His207. 3 residues coordinate Ca(2+): Asp209, Asp210, and Glu212. Residues 223 to 397 are collagen-binding; sequence RVKYGNADGE…WGFCPDQGYS (175 aa). 3 Fibronectin type-II domains span residues 229 to 277, 287 to 335, and 345 to 393; these read ADGE…FCPH, ADGQ…FCPE, and SEGA…FCPD. 6 disulfides stabilise this stretch: Cys234–Cys260, Cys248–Cys275, Cys292–Cys318, Cys306–Cys333, Cys350–Cys376, and Cys364–Cys391. The tract at residues 398–466 is collagenase-like 2; the sequence is LFLVAAHEFG…GPTPTLGPVT (69 aa). Residue His404 participates in Zn(2+) binding. Glu405 is an active-site residue. Zn(2+)-binding residues include His408 and His414. Residues 415 to 661 are required for inhibitor TIMP2 binding; that stretch reads SQDPGALMAP…GSIKSDWLGC (247 aa). Hemopexin repeat units lie at residues 469–517, 518–564, 566–614, and 615–661; these read LCKQ…WPEL, PEKI…GLPP, VQKV…WNAI, and PDNL…WLGC. A disulfide bridge connects residues Cys470 and Cys661. Asp477, Asp522, and Asp570 together coordinate Ca(2+). Asn574 carries an N-linked (GlcNAc...) asparagine glycan. Position 619 (Asp619) interacts with Ca(2+). An N-linked (GlcNAc...) asparagine glycan is attached at Asn643.

Belongs to the peptidase M10A family. Interacts (via the C-terminal hemopexin-like domains-containing region) with the integrin alpha-V/beta-3; the interaction promotes vascular invasion in angiogenic vessels and melamoma cells. Interacts (via the C-terminal PEX domain) with TIMP2 (via the C-terminal); the interaction inhibits the degradation activity. Interacts with GSK3B. Ca(2+) serves as cofactor. Requires Zn(2+) as cofactor. Phosphorylation on multiple sites modulates enzymatic activity. Phosphorylated by PKC in vitro. Post-translationally, the propeptide is processed by MMP14 (MT-MMP1) and MMP16 (MT-MMP3). Autocatalytic cleavage in the C-terminal produces the anti-angiogenic peptide, PEX. This processing appears to be facilitated by binding integrinv/beta3.

The protein resides in the secreted. It localises to the extracellular space. Its subcellular location is the extracellular matrix. The protein localises to the membrane. It is found in the nucleus. The enzyme catalyses Cleavage of gelatin type I and collagen types IV, V, VII, X. Cleaves the collagen-like sequence Pro-Gln-Gly-|-Ile-Ala-Gly-Gln.. Its function is as follows. Ubiquitinous metalloproteinase that is involved in diverse functions such as remodeling of the vasculature, angiogenesis, tissue repair, tumor invasion, inflammation, and atherosclerotic plaque rupture. As well as degrading extracellular matrix proteins, can also act on several nonmatrix proteins such as big endothelial 1 and beta-type CGRP promoting vasoconstriction. Also cleaves KISS at a Gly-|-Leu bond. Appears to have a role in myocardial cell death pathways. Contributes to myocardial oxidative stress by regulating the activity of GSK3beta. Cleaves GSK3beta in vitro. Involved in the formation of the fibrovascular tissues. Functionally, PEX, the C-terminal non-catalytic fragment of MMP2, possesses anti-angiogenic and anti-tumor properties and inhibits cell migration and cell adhesion to FGF2 and vitronectin. Ligand for integrin alpha-v/beta-3 on the surface of blood vessels. This Bos taurus (Bovine) protein is 72 kDa type IV collagenase (MMP2).